We begin with the raw amino-acid sequence, 499 residues long: Phenylalanine--tRNA ligase alpha subunit B (499 aa).

L-phenylalanine is bound by residues Thr330, Gln373–Glu375, and Tyr413. Glu415 serves as a coordination point for Mg(2+). Residue Phe439 coordinates L-phenylalanine.

This sequence belongs to the class-II aminoacyl-tRNA synthetase family. Phe-tRNA synthetase alpha subunit type 2 subfamily. As to quaternary structure, heterotetramer; dimer of two heterodimers formed by alpha and beta subunits. It depends on Mg(2+) as a cofactor.

The protein localises to the cytoplasm. The catalysed reaction is tRNA(Phe) + L-phenylalanine + ATP = L-phenylalanyl-tRNA(Phe) + AMP + diphosphate + H(+). This Xenopus laevis (African clawed frog) protein is Phenylalanine--tRNA ligase alpha subunit B (farsa-b).